Here is a 630-residue protein sequence, read N- to C-terminus: Protein zwilch homolog (630 aa).

It belongs to the ZWILCH family. In terms of assembly, component of the RZZ complex composed of rod-1, czw-1 and zwl-1. Interacts with the spindly-like protein spdl-1. Interacts with NDC80 complex component ndc-80.

It is found in the cytoplasm. Its subcellular location is the cell cortex. The protein localises to the chromosome. It localises to the centromere. The protein resides in the kinetochore. It is found in the cytoskeleton. Its subcellular location is the spindle. In terms of biological role, essential component of the mitotic checkpoint, which prevents cells from prematurely exiting mitosis. Required for chromosome segregation, the assembly of the dynein-dynactin and mdf-1-mdf-2 complexes onto kinetochores and spindle pole separation. Its function related to the spindle assembly machinery and kinetochore-microtubule attachments likely depends on its association in the mitotic RZZ complex. The RZZ complex recruits the spindly-like protein spdl-1 to kinetochores. To prevent irregular chromosome segregation, the complex also inhibits the attachment of the kinetochore-associated NDC80 complex to microtubules. The recruitment of spdl-1 to kinetochores relieves this inhibition. Required for embryonic development. This chain is Protein zwilch homolog (zwl-1), found in Caenorhabditis elegans.